The primary structure comprises 150 residues: D-aminoacyl-tRNA deacylase (150 aa).

The Gly-cisPro motif, important for rejection of L-amino acids motif lies at 140 to 141; that stretch reads GP.

The protein belongs to the DTD family. Homodimer.

The protein localises to the cytoplasm. The catalysed reaction is glycyl-tRNA(Ala) + H2O = tRNA(Ala) + glycine + H(+). It catalyses the reaction a D-aminoacyl-tRNA + H2O = a tRNA + a D-alpha-amino acid + H(+). Its function is as follows. An aminoacyl-tRNA editing enzyme that deacylates mischarged D-aminoacyl-tRNAs. Also deacylates mischarged glycyl-tRNA(Ala), protecting cells against glycine mischarging by AlaRS. Acts via tRNA-based rather than protein-based catalysis; rejects L-amino acids rather than detecting D-amino acids in the active site. By recycling D-aminoacyl-tRNA to D-amino acids and free tRNA molecules, this enzyme counteracts the toxicity associated with the formation of D-aminoacyl-tRNA entities in vivo and helps enforce protein L-homochirality. The polypeptide is D-aminoacyl-tRNA deacylase (DTD1) (Kluyveromyces lactis (strain ATCC 8585 / CBS 2359 / DSM 70799 / NBRC 1267 / NRRL Y-1140 / WM37) (Yeast)).